Reading from the N-terminus, the 79-residue chain is Large ribosomal subunit protein bL28 (79 aa).

It belongs to the bacterial ribosomal protein bL28 family.

In Christiangramia forsetii (strain DSM 17595 / CGMCC 1.15422 / KT0803) (Gramella forsetii), this protein is Large ribosomal subunit protein bL28.